The sequence spans 1263 residues: Condensin complex subunit dpy-26 (1263 aa).

Polar residues predominate over residues 1–10 (MDVPSSSNVT). Positions 1 to 29 (MDVPSSSNVTGRRKRQVLDDDEDDGFRST) are disordered. Residues 691–725 (NEQMDETEVEERNEQDVQRELEDIALAADEVAELM) adopt a coiled-coil conformation. Disordered regions lie at residues 1098–1118 (YQAA…GTAN) and 1225–1263 (FSNL…EMEE). The span at 1106 to 1118 (NNQPTTSTYGTAN) shows a compositional bias: polar residues. Residues 1230–1241 (RRPKAVPVRKGR) show a composition bias toward basic residues.

Component of the condensin I complex, which contains the mix-1/SMC2 and smc-4/SMC4 heterodimer, and three non SMC subunits that probably regulate the complex: dpy-26, capg-1 and dpy-28. Within the complex, interacts with dpy-28, mix-1, smc-4 and capg-1. Component of the dosage compensation complex, which consists of the condensin I-like components mix-1/SMC2 and dpy-27/SMC4, and the three non SMC subunits dpy-26, capg-1 and dpy-28. Within the complex, interacts with dpy-27, dpy-28, mix-1 and capg-1. The interaction with dpy-27 is required for dpy-27 protein stability. Interacts with smcl-1. As to expression, expressed in embryos and in somatic and germline tissues in L4 stage larvae (at protein level).

It localises to the nucleus. The protein resides in the chromosome. In terms of biological role, required for both chromosome condensation and segregation and for X-chromosome dosage compensation depending on its binding partners. Member of the condensin I complex, a complex required for conversion of interphase chromatin into mitotic-like condense chromosomes and for proper chromosome segregation in mitosis and meiosis. As a member of the condensin I complex, further controls the crossover number and distribution in meiosis by restricting double strand break formation, probably by influencing higher-order chromosome structure. Plays a role in robust cytokinesis upon presence of chromatin obstructions. Also a member of the condensin I-like dosage compensation complex that associates specifically with hermaphrodite X chromosomes to reduce their gene transcription during interphase, possibly through chromatin reorganization. As a member of the dosage compensation complex, also binds to regulatory regions of the autosomal her-1 gene, required for male development, possibly contributing to its repression in hermaphrodites. The protein is Condensin complex subunit dpy-26 of Caenorhabditis elegans.